The primary structure comprises 363 residues: Flagellar P-ring protein (363 aa).

Residues 1–20 (MKCKLIFAVFMLAFSMPSQA) form the signal peptide.

This sequence belongs to the FlgI family. As to quaternary structure, the basal body constitutes a major portion of the flagellar organelle and consists of four rings (L,P,S, and M) mounted on a central rod.

It is found in the periplasm. The protein resides in the bacterial flagellum basal body. Its function is as follows. Assembles around the rod to form the L-ring and probably protects the motor/basal body from shearing forces during rotation. The chain is Flagellar P-ring protein from Shewanella oneidensis (strain ATCC 700550 / JCM 31522 / CIP 106686 / LMG 19005 / NCIMB 14063 / MR-1).